A 424-amino-acid chain; its full sequence is Chitinase CLP (424 aa).

The first 18 residues, 1-18, serve as a signal peptide directing secretion; that stretch reads MSLHLLLAVSLCVALASS. In terms of domain architecture, Peptidase A1 spans 43-405; that stretch reads AATSLYTVPI…DEEKQRLGFS (363 aa). N139, N345, and N419 each carry an N-linked (GlcNAc...) asparagine glycan.

Belongs to the peptidase A1 family. Expressed in roots. Expressed at low levels in leaf sheaths, stems and flowers.

It is found in the secreted. Its subcellular location is the extracellular space. It localises to the apoplast. The enzyme catalyses Random endo-hydrolysis of N-acetyl-beta-D-glucosaminide (1-&gt;4)-beta-linkages in chitin and chitodextrins.. Functionally, chitinase that possesses antifungal activity. Inhibits the growth of the fungal pathogen Rhizoctonia solani by degrading the fungal cell wall. Does not possess inhibiting activity against fungal endo-1,4-beta-D-xylanases belonging to glycoside hydrolase family 10 (GH10) and family 11 (GH11). Involved in the regulation of plant growth by regulating the intracellular calcium ion concentration in roots. The sequence is that of Chitinase CLP from Oryza sativa subsp. japonica (Rice).